A 565-amino-acid chain; its full sequence is NAD-dependent malic enzyme (565 aa).

Catalysis depends on Y104, which acts as the Proton donor. An NAD(+)-binding site is contributed by R157. K175 (proton acceptor) is an active-site residue. A divalent metal cation is bound by residues E246, D247, and D270. NAD(+) contacts are provided by D270 and N418.

The protein belongs to the malic enzymes family. As to quaternary structure, homotetramer. Mg(2+) serves as cofactor. The cofactor is Mn(2+).

The catalysed reaction is (S)-malate + NAD(+) = pyruvate + CO2 + NADH. It carries out the reaction oxaloacetate + H(+) = pyruvate + CO2. This is NAD-dependent malic enzyme from Yersinia pseudotuberculosis serotype O:1b (strain IP 31758).